The sequence spans 188 residues: Elongation factor P (188 aa).

Position 34 is an N6-(3,6-diaminohexanoyl)-5-hydroxylysine (lysine 34).

The protein belongs to the elongation factor P family. In terms of processing, may be beta-lysylated on the epsilon-amino group of Lys-34 by the combined action of EpmA and EpmB, and then hydroxylated on the C5 position of the same residue by EpmC (if this protein is present). Lysylation is critical for the stimulatory effect of EF-P on peptide-bond formation. The lysylation moiety may extend toward the peptidyltransferase center and stabilize the terminal 3-CCA end of the tRNA. Hydroxylation of the C5 position on Lys-34 may allow additional potential stabilizing hydrogen-bond interactions with the P-tRNA.

The protein resides in the cytoplasm. The protein operates within protein biosynthesis; polypeptide chain elongation. In terms of biological role, involved in peptide bond synthesis. Alleviates ribosome stalling that occurs when 3 or more consecutive Pro residues or the sequence PPG is present in a protein, possibly by augmenting the peptidyl transferase activity of the ribosome. Modification of Lys-34 is required for alleviation. The sequence is that of Elongation factor P from Proteus mirabilis (strain HI4320).